Consider the following 154-residue polypeptide: MIIKNLQEFYRLLIPNAPLIAIDYGSKKLGIALSNQELSIAMPLNTITEINTKIVITVLLNIIEKYKVCGVIIGLPIDMSGAVTEQTNIVMKFAEELAKSINLPIYLQDERLTTKAANNLLKSFGVKRKDRNNNDDAVAASMILETVLDSIKNI.

It belongs to the YqgF nuclease family.

It is found in the cytoplasm. Its function is as follows. Could be a nuclease involved in processing of the 5'-end of pre-16S rRNA. The polypeptide is Putative pre-16S rRNA nuclease (Rickettsia rickettsii (strain Iowa)).